Reading from the N-terminus, the 662-residue chain is Transketolase (662 aa).

His-28 lines the substrate pocket. Thiamine diphosphate contacts are provided by residues His-68 and 115–117; that span reads GPL. Residue Asp-156 coordinates Mg(2+). Thiamine diphosphate contacts are provided by Gly-157 and Asn-186. Mg(2+)-binding residues include Asn-186 and Ile-188. Substrate is bound by residues His-261, Arg-356, and Ser-383. Residue His-261 coordinates thiamine diphosphate. Glu-410 (proton donor) is an active-site residue. A thiamine diphosphate-binding site is contributed by Phe-436. Substrate contacts are provided by His-460, Asp-468, and Arg-519.

The protein belongs to the transketolase family. In terms of assembly, homodimer. Mg(2+) serves as cofactor. It depends on Ca(2+) as a cofactor. Mn(2+) is required as a cofactor. The cofactor is Co(2+). Requires thiamine diphosphate as cofactor.

It catalyses the reaction D-sedoheptulose 7-phosphate + D-glyceraldehyde 3-phosphate = aldehydo-D-ribose 5-phosphate + D-xylulose 5-phosphate. Its pathway is carbohydrate biosynthesis; Calvin cycle. It participates in carbohydrate degradation; pentose phosphate pathway. Catalyzes the transfer of a two-carbon ketol group from a ketose donor to an aldose acceptor, via a covalent intermediate with the cofactor thiamine pyrophosphate. This is Transketolase (tkt) from Staphylococcus epidermidis (strain ATCC 35984 / DSM 28319 / BCRC 17069 / CCUG 31568 / BM 3577 / RP62A).